The sequence spans 334 residues: Protein translocase subunit SecF (334 aa).

A run of 6 helical transmembrane segments spans residues 18 to 38, 144 to 164, 168 to 190, 195 to 217, 258 to 278, and 279 to 299; these read VAAGLTLAFIAAGFVSFAVTG, GAAMAMLIASIFTLIYLAIRF, FGLAAVLSTTHDILITLAFIKIF, SLTVVAAILTLVGYSANDTIIIF, ATLALLLLAGEVIRPFAWVMA, and FGVVMATFSSIYVAGPLLLWI.

It belongs to the SecD/SecF family. SecF subfamily. As to quaternary structure, forms a complex with SecD. Part of the essential Sec protein translocation apparatus which comprises SecA, SecYEG and auxiliary proteins SecDF. Other proteins may also be involved.

It localises to the cell inner membrane. Part of the Sec protein translocase complex. Interacts with the SecYEG preprotein conducting channel. SecDF uses the proton motive force (PMF) to complete protein translocation after the ATP-dependent function of SecA. The protein is Protein translocase subunit SecF of Gemmatimonas aurantiaca (strain DSM 14586 / JCM 11422 / NBRC 100505 / T-27).